The primary structure comprises 1404 residues: DNA-directed RNA polymerase subunit beta' (1404 aa).

Positions 70, 72, 85, and 88 each coordinate Zn(2+). Mg(2+) is bound by residues aspartate 460, aspartate 462, and aspartate 464. Zn(2+) contacts are provided by cysteine 814, cysteine 889, cysteine 896, and cysteine 899. The interval 1377–1404 (DSEMETLSGKPAAAEPVAAVADAGADEE) is disordered. The span at 1387–1404 (PAAAEPVAAVADAGADEE) shows a compositional bias: low complexity.

This sequence belongs to the RNA polymerase beta' chain family. In terms of assembly, the RNAP catalytic core consists of 2 alpha, 1 beta, 1 beta' and 1 omega subunit. When a sigma factor is associated with the core the holoenzyme is formed, which can initiate transcription. Mg(2+) is required as a cofactor. The cofactor is Zn(2+).

It catalyses the reaction RNA(n) + a ribonucleoside 5'-triphosphate = RNA(n+1) + diphosphate. Its function is as follows. DNA-dependent RNA polymerase catalyzes the transcription of DNA into RNA using the four ribonucleoside triphosphates as substrates. The chain is DNA-directed RNA polymerase subunit beta' from Xanthomonas euvesicatoria pv. vesicatoria (strain 85-10) (Xanthomonas campestris pv. vesicatoria).